A 337-amino-acid chain; its full sequence is Serpentine receptor class delta-50 (337 aa).

Transmembrane regions (helical) follow at residues 10–30 (VLIL…SQLL), 48–68 (IYLF…FVLQ), 107–127 (VLFH…IIAF), 147–167 (QLVI…LSPN), 202–222 (SSQT…ALVF), 250–270 (GLTL…TYYI), and 280–300 (LFVE…DPLL).

Belongs to the nematode receptor-like protein srd family.

The protein resides in the membrane. In Caenorhabditis elegans, this protein is Serpentine receptor class delta-50.